Consider the following 145-residue polypeptide: Prefoldin subunit alpha (145 aa).

The protein belongs to the prefoldin alpha subunit family. As to quaternary structure, heterohexamer of two alpha and four beta subunits.

It is found in the cytoplasm. Its function is as follows. Molecular chaperone capable of stabilizing a range of proteins. Seems to fulfill an ATP-independent, HSP70-like function in archaeal de novo protein folding. The protein is Prefoldin subunit alpha of Nitrosopumilus maritimus (strain SCM1).